We begin with the raw amino-acid sequence, 271 residues long: Thiazole synthase (271 aa).

Lysine 104 (schiff-base intermediate with DXP) is an active-site residue. 1-deoxy-D-xylulose 5-phosphate-binding positions include glycine 165, alanine 192–glycine 193, and asparagine 214–threonine 215.

This sequence belongs to the ThiG family. Homotetramer. Forms heterodimers with either ThiH or ThiS.

The protein resides in the cytoplasm. It catalyses the reaction [ThiS sulfur-carrier protein]-C-terminal-Gly-aminoethanethioate + 2-iminoacetate + 1-deoxy-D-xylulose 5-phosphate = [ThiS sulfur-carrier protein]-C-terminal Gly-Gly + 2-[(2R,5Z)-2-carboxy-4-methylthiazol-5(2H)-ylidene]ethyl phosphate + 2 H2O + H(+). It participates in cofactor biosynthesis; thiamine diphosphate biosynthesis. In terms of biological role, catalyzes the rearrangement of 1-deoxy-D-xylulose 5-phosphate (DXP) to produce the thiazole phosphate moiety of thiamine. Sulfur is provided by the thiocarboxylate moiety of the carrier protein ThiS. In vitro, sulfur can be provided by H(2)S. This Burkholderia thailandensis (strain ATCC 700388 / DSM 13276 / CCUG 48851 / CIP 106301 / E264) protein is Thiazole synthase.